Consider the following 200-residue polypeptide: Large ribosomal subunit protein uL4 (200 aa).

The tract at residues 42 to 65 is disordered; it reads TRAQKTRSEVSGGGAKPWRQKGTG.

It belongs to the universal ribosomal protein uL4 family. As to quaternary structure, part of the 50S ribosomal subunit.

Its function is as follows. One of the primary rRNA binding proteins, this protein initially binds near the 5'-end of the 23S rRNA. It is important during the early stages of 50S assembly. It makes multiple contacts with different domains of the 23S rRNA in the assembled 50S subunit and ribosome. Functionally, forms part of the polypeptide exit tunnel. This chain is Large ribosomal subunit protein uL4, found in Vibrio atlanticus (strain LGP32) (Vibrio splendidus (strain Mel32)).